We begin with the raw amino-acid sequence, 53 residues long: UPF0391 membrane protein PSEEN0090 (53 aa).

The next 2 membrane-spanning stretches (helical) occupy residues tryptophan 4–alanine 24 and glycine 29–glycine 49.

The protein belongs to the UPF0391 family.

Its subcellular location is the cell membrane. The polypeptide is UPF0391 membrane protein PSEEN0090 (Pseudomonas entomophila (strain L48)).